Reading from the N-terminus, the 958-residue chain is MATFAKPENALKRAEELITVGQKQEALQALHDLITSRRYRAWQKTLERIMFKYVELCVDMRRGRFAKDGLIQYRIVCQQVNINSLEEVIKHFMHLATERAELARNQAQALEEALDVEDLEADKRPEDLMLSYVSGEKGKDRSDRELVTPWFKFLWETYRTVLEILRNNSRLEALYAMTAHRAFQFCKQYKRTTEFRRLCEIIRNHLANLNKYRDQRDRPDLSAPESLQLYLDTRFEQLKVATELGLWQEAFRSIEDIYGLMCMVKKTPKASLMVVYYGKLTEIFWMSSNHLYHAYAWLKLFSLQKSFNKNLSQKDLQLIASSVVLAALSVPPYDQSYGASHLELENEKERSLRVANLIGFEVEPKAENRVALSRSSLLSELVSKGVMSCVTQEVKDLYHLLENEFLPLDLALKVQPVLSKISKLGGKLSSVSSVPEVQLSQYVPALEKLATLRLLQQVSQVYQTIQIDNISKMIPFFDFTVIEKISVDAVRRNFLAIKVDHMKGLSSLVNRVLRRKDSGIICLFLAESLSKARTMIYPPAKKAAKLGEALSNLAEIVEKEHKRLLARKSIIEKRKEEQERLLLEMERVEETKRRDVQKMTEEAEQKRIAAEYEQRRNQRILKEIEDRELEEAQALLHEAEKRSKRKKKPVLEGEKMTKKVIMELALNEQLRERQEMEKKLLKFAKSMDHLERAKREEAAPLIESAFKQRLAEEAALHEREQQQEIELSRQRHAGDLEEKRRLARMLENKRILQEKVVSSREAEFTRMKRERQERISQIIQSRKQEREARRKMIFFLRSEEERQKRLQEEEEARKREEAERRKKEEAERQAKLDEIAEKQRRRMLELEEKEKREREEILRKSTAVLPKPAEPPTLGRPAELGGAAPIPAAAATAPTPGPGKYVPKHLRTKMDGAGQAPPPETDKWGGGSKPDDRPSWRDERKPPSFGSGSRTSWPASRR.

Residues 93 to 123 (MHLATERAELARNQAQALEEALDVEDLEADK) adopt a coiled-coil conformation. Residues 316 to 513 (LQLIASSVVL…GLSSLVNRVL (198 aa)) form the PCI domain. 2 coiled-coil regions span residues 548-696 (EALS…AKRE) and 796-861 (LRSE…LRKS). The segment covering 804–859 (KRLQEEEEARKREEAERRKKEEAERQAKLDEIAEKQRRRMLELEEKEKREREEILR) has biased composition (basic and acidic residues). Positions 804–958 (KRLQEEEEAR…SRTSWPASRR (155 aa)) are disordered. The span at 877-894 (PAELGGAAPIPAAAATAP) shows a compositional bias: low complexity. Over residues 929 to 942 (KPDDRPSWRDERKP) the composition is skewed to basic and acidic residues. Polar residues predominate over residues 946–958 (GSGSRTSWPASRR).

The protein belongs to the eIF-3 subunit A family. In terms of assembly, component of the eukaryotic translation initiation factor 3 (eIF-3) complex.

The protein localises to the cytoplasm. Functionally, RNA-binding component of the eukaryotic translation initiation factor 3 (eIF-3) complex, which is involved in protein synthesis of a specialized repertoire of mRNAs and, together with other initiation factors, stimulates binding of mRNA and methionyl-tRNAi to the 40S ribosome. The eIF-3 complex specifically targets and initiates translation of a subset of mRNAs involved in cell proliferation. The protein is Eukaryotic translation initiation factor 3 subunit A (TIF3A1) of Nicotiana tabacum (Common tobacco).